A 270-amino-acid chain; its full sequence is Proteasome inhibitor PI31 subunit (270 aa).

N-acetylalanine is present on Ala-2. An important for homodimerization and interaction with FBXO7 region spans residues 2–150 (AGLEVLFASA…PIHEQWEKAN (149 aa)). Ser-152 bears the Phosphoserine mark. At Arg-204 the chain carries Omega-N-methylarginine. An Asymmetric dimethylarginine modification is found at Arg-218. The segment at 220-270 (LIDPSSGLPNRLPPGAVPPGARFDPFGPIGTSPSGPNPDHLPPPGYDDMYL) is disordered. An Omega-N-methylarginine modification is found at Arg-230. Ser-251 is modified (phosphoserine). Positions 254 to 264 (GPNPDHLPPPG) are enriched in pro residues.

This sequence belongs to the proteasome inhibitor PI31 family. Monomer and homodimer. Interacts with FBXO7.

The protein resides in the cytoplasm. Its subcellular location is the endoplasmic reticulum. Functionally, plays an important role in control of proteasome function. Inhibits the hydrolysis of protein and peptide substrates by the 20S proteasome. Also inhibits the activation of the proteasome by the proteasome regulatory proteins PA700 and PA28. This chain is Proteasome inhibitor PI31 subunit (PSMF1), found in Bos taurus (Bovine).